Here is a 369-residue protein sequence, read N- to C-terminus: 2-aminoethylphosphonate--pyruvate transaminase (369 aa).

The residue at position 193 (K193) is an N6-(pyridoxal phosphate)lysine.

Belongs to the class-V pyridoxal-phosphate-dependent aminotransferase family. PhnW subfamily. In terms of assembly, homodimer. It depends on pyridoxal 5'-phosphate as a cofactor.

The enzyme catalyses (2-aminoethyl)phosphonate + pyruvate = phosphonoacetaldehyde + L-alanine. In terms of biological role, involved in phosphonate degradation. This is 2-aminoethylphosphonate--pyruvate transaminase from Burkholderia mallei (strain NCTC 10247).